A 566-amino-acid polypeptide reads, in one-letter code: Alpha-keto-acid decarboxylase (566 aa).

Position 61 (Glu-61) interacts with thiamine diphosphate. The segment at 396–478 (TSFYGMADHR…VVVNNDGYTV (83 aa)) is thiamine pyrophosphate binding. 3 residues coordinate Mg(2+): Asp-446, Asn-473, and Gly-475.

The protein belongs to the TPP enzyme family. A metal cation serves as cofactor. Requires thiamine diphosphate as cofactor.

Functionally, decarboxylates branched-chain and aromatic alpha-keto acids to aldehydes. The chain is Alpha-keto-acid decarboxylase (kdc) from Mycobacterium ulcerans (strain Agy99).